The chain runs to 255 residues: Borealin-2 (255 aa).

Disordered regions lie at residues 1–24 (MAPRRTRKVSQDSDGQADDQHSFE) and 107–156 (IQKP…STGS). Residues 124-135 (AGQQRSSSQSKT) show a composition bias toward polar residues.

The protein belongs to the borealin family. As to quaternary structure, component of the CPC complex.

It localises to the nucleus. The protein localises to the chromosome. The protein resides in the centromere. Component of the chromosomal passenger complex (CPC), a complex that acts as a key regulator of mitosis. The CPC complex has essential functions at the centromere in ensuring correct chromosome alignment and segregation and is required for chromatin-induced microtubule stabilization and spindle assembly. The sequence is that of Borealin-2 (cdca9) from Danio rerio (Zebrafish).